A 240-amino-acid chain; its full sequence is Large ribosomal subunit protein bL25 (240 aa).

The segment at 1 to 24 (MATVMEFKATARPKSGKGAARAER) is disordered.

This sequence belongs to the bacterial ribosomal protein bL25 family. CTC subfamily. In terms of assembly, part of the 50S ribosomal subunit; part of the 5S rRNA/L5/L18/L25 subcomplex. Contacts the 5S rRNA. Binds to the 5S rRNA independently of L5 and L18.

Its function is as follows. This is one of the proteins that binds to the 5S RNA in the ribosome where it forms part of the central protuberance. This chain is Large ribosomal subunit protein bL25, found in Rhodopseudomonas palustris (strain HaA2).